Here is a 200-residue protein sequence, read N- to C-terminus: Small ribosomal subunit protein uS4 (200 aa).

Residues 92 to 155 (SRLDNLVYRM…RNLTVVKEAL (64 aa)) form the S4 RNA-binding domain.

The protein belongs to the universal ribosomal protein uS4 family. As to quaternary structure, part of the 30S ribosomal subunit. Contacts protein S5. The interaction surface between S4 and S5 is involved in control of translational fidelity.

Its function is as follows. One of the primary rRNA binding proteins, it binds directly to 16S rRNA where it nucleates assembly of the body of the 30S subunit. With S5 and S12 plays an important role in translational accuracy. The protein is Small ribosomal subunit protein uS4 of Shouchella clausii (strain KSM-K16) (Alkalihalobacillus clausii).